Consider the following 415-residue polypeptide: Dynein assembly factor with WD repeat domains 1 (415 aa).

WD repeat units lie at residues 90–129 (AHIL…ELHT), 132–172 (GHRN…CFYT), 175–214 (GHTA…EVST), 217–256 (GHFA…KVHV), 259–298 (GHRG…CLAT), 301–340 (GHND…CLCQ), 343–384 (GHKG…QVLE), and 385–415 (GHSD…RIWH).

The protein belongs to the WD repeat WDR69 family. As to expression, expressed in organs bearing motile cilia, including the pronephros, otic vesicles and Kupffer's vesicle.

It is found in the cytoplasm. The protein resides in the cytoskeleton. It localises to the flagellum basal body. The protein localises to the flagellum axoneme. In terms of biological role, required for axonemal dynein assembly and ciliary motility in ciliated organs, including Kupffer's vesicle, during embryogenesis. Facilitates the onset of robust cilia motility during development. This is Dynein assembly factor with WD repeat domains 1 (daw1) from Danio rerio (Zebrafish).